A 319-amino-acid polypeptide reads, in one-letter code: Thioredoxin reductase (319 aa).

Position 36-48 (Glu36–Gln48) interacts with FAD. A disulfide bond links Cys144 and Cys147. Residue Asp289–Ala298 coordinates FAD.

Belongs to the class-II pyridine nucleotide-disulfide oxidoreductase family. In terms of assembly, homodimer. It depends on FAD as a cofactor.

The enzyme catalyses [thioredoxin]-dithiol + NADP(+) = [thioredoxin]-disulfide + NADPH + H(+). The chain is Thioredoxin reductase (trrA) from Dictyostelium discoideum (Social amoeba).